A 583-amino-acid chain; its full sequence is Threonine--tRNA ligase (583 aa).

A catalytic region spans residues 185–478 (DHRKLGRELN…LVEHYGGAFP (294 aa)). Zn(2+) is bound by residues Cys278, His329, and His455.

It belongs to the class-II aminoacyl-tRNA synthetase family. In terms of assembly, homodimer. The cofactor is Zn(2+).

It localises to the cytoplasm. It catalyses the reaction tRNA(Thr) + L-threonine + ATP = L-threonyl-tRNA(Thr) + AMP + diphosphate + H(+). Catalyzes the attachment of threonine to tRNA(Thr) in a two-step reaction: L-threonine is first activated by ATP to form Thr-AMP and then transferred to the acceptor end of tRNA(Thr). Also edits incorrectly charged L-seryl-tRNA(Thr). This is Threonine--tRNA ligase from Borrelia duttonii (strain Ly).